Reading from the N-terminus, the 116-residue chain is UPF0102 protein Neut_1662 (116 aa).

Belongs to the UPF0102 family.

This Nitrosomonas eutropha (strain DSM 101675 / C91 / Nm57) protein is UPF0102 protein Neut_1662.